The following is a 229-amino-acid chain: Ribonuclease 3 (229 aa).

The RNase III domain maps to 5–127 (LNRLERKLGH…LIGAIYLDAG (123 aa)). Glu-40 provides a ligand contact to Mg(2+). Asp-44 is an active-site residue. Mg(2+) contacts are provided by Asp-113 and Glu-116. Glu-116 is an active-site residue. Positions 154-224 (DPKTRLQEFL…AAAALVALGV (71 aa)) constitute a DRBM domain.

It belongs to the ribonuclease III family. As to quaternary structure, homodimer. It depends on Mg(2+) as a cofactor.

Its subcellular location is the cytoplasm. The enzyme catalyses Endonucleolytic cleavage to 5'-phosphomonoester.. Digests double-stranded RNA. Involved in the processing of primary rRNA transcript to yield the immediate precursors to the large and small rRNAs (23S and 16S). Processes some mRNAs, and tRNAs when they are encoded in the rRNA operon. Processes pre-crRNA and tracrRNA of type II CRISPR loci if present in the organism. The sequence is that of Ribonuclease 3 from Azotobacter vinelandii (strain DJ / ATCC BAA-1303).